Consider the following 971-residue polypeptide: Breast cancer type 2 susceptibility protein homolog (971 aa).

Residues 1 to 15 (MDQNGASGSHPNRLS) are compositionally biased toward polar residues. Disordered stretches follow at residues 1–30 (MDQN…ATVS), 130–155 (SRKR…LSVQ), 349–395 (KLKL…DQPN), and 420–466 (MQCS…SSHQ). Residues 130–139 (SRKRDPKSHK) are compositionally biased toward basic residues. The segment covering 349 to 364 (KLKLEPSSQKEQKSSK) has biased composition (basic and acidic residues). Polar residues-rich tracts occupy residues 375 to 392 (SKQS…TILD), 420 to 432 (MQCS…SKNA), and 453 to 466 (KQTP…SSHQ). BRCA2 repeat units follow at residues 570–604 (AEPE…EFQS), 671–705 (NESQ…QSKA), and 746–780 (SETE…EFQA). The segment at 916 to 971 (MERFAPKPSSTSTPLADRDLNRSKDCTKNRQDAEDMSPICMQPKKSRRLGLSRSRY) is disordered. Over residues 931–948 (ADRDLNRSKDCTKNRQDA) the composition is skewed to basic and acidic residues. The segment covering 959–971 (KKSRRLGLSRSRY) has biased composition (basic residues).

Interacts with Rad9. Interacts with spn-A/Rad51. Interacts with cyclin CycG.

Its subcellular location is the nucleus. Involved in and required for double-strand break repair by meiotic and mitotic homologous recombination. During meiosis, has a dual role in the repair of meiotic double-stranded breaks and the efficient activation of the meiotic recombination checkpoint. This is Breast cancer type 2 susceptibility protein homolog from Drosophila melanogaster (Fruit fly).